Consider the following 762-residue polypeptide: MGCCFSVQFSFDDQTLVRIFNFLCGNINRNSFGVEERPTQPTIGQEEMLEKAWNRLMEDRVGIMGLHGMGGVGKTTLFKKIHNKFAKMSSRFDIVIWIVVSKGAKLSKLQEDIAEKLHLCDDLWKNKNESDKATDIHRVLKGKRFVLMLDDIWEKVDLEAIGVPYPSEVNKCKVAFTTRDQKVCGEMGDHKPMQVKCLEPEDAWELFKNKVGDNTLRSDPVIVELAREVAQKCRGLPLALSVIGETMASKTMVQEWEHAIDVLTRSAAEFSNMGNKILPILKYSYDSLGDEHIKSCFLYCALFPEDDEIYNEKLIDYWICEGFIGEDQVIKRARNKGYEMLGTLTLANLLTKVGTEHVVMHDVVREMALWIASDFGKQKENFVVRARVGLHERPEAKDWGAVRRMSLMDNHIEEITCESKCSELTTLFLQSNQLKNLSGEFIRYMQKLVVLDLSYNRDFNKLPEQISGLVSLQFLDLSNTSIKQLPVGLKKLKKLTFLNLAYTVRLCSISGISRLLSLRLLRLLGSKVHGDASVLKELQKLQNLQHLAITLSAELSLNQRLANLISILGIEGFLQKPFDLSFLASMENLSSLWVKNSYFSEIKCRESETASSYLRINPKIPCFTNLSRLGLSKCHSIKDLTWILFAPNLVYLYIEDSREVGEIINKEKATNLTSITPFLKLERLILYNLPKLESIYWSPLHFPRLLIIHVLDCPKLRKLPLNATSVPLVEEFQIRMYPPGLGNELEWEDEDTKNRFVLSIKK.

Gly2 carries N-myristoyl glycine lipidation. Residues Cys3 and Cys4 are each lipidated (S-palmitoyl cysteine). Positions 26 to 329 (NINRNSFGVE…CEGFIGEDQV (304 aa)) constitute an NB-ARC domain. Position 68–75 (68–75 (GMGGVGKT)) interacts with ATP. 5 LRR repeats span residues 401–422 (AVRRMSLMDNHIEEITCESKCS), 423–444 (ELTTLFLQSNQLKNLSGEFIRY), 447–470 (KLVVLDLSYNRDFNKLPEQISGLV), 471–493 (SLQFLDLSNTSIKQLPVGLKKLK), and 494–516 (KLTFLNLAYTVRLCSISGISRLL).

It belongs to the disease resistance NB-LRR family.

Its subcellular location is the cell membrane. In terms of biological role, probable disease resistance protein. The protein is Probable disease resistance protein At1g61300 of Arabidopsis thaliana (Mouse-ear cress).